Here is a 250-residue protein sequence, read N- to C-terminus: NWKCNLSKADIAELVSAFNAAPPIDAAHVQVVVAPPAVYLDSTRQALRADFDTSAQNAWISKGGAFTGELDAAMVKDVGAEWVILGHSERRHIAQLKESDHTIAMKAAYALQHASLGVIYCIGELLEERESGQTIAVCERQLQALSDAISDWSDVVIAYEPVWAIGTGKVATPEQAEQVHEAVRAWLANNVSPQVAASTRILYGGSVSPANCESLAKQPNIDGFLVGGASMKPTFLEIVDSYKATLAEAV.

Substrate-binding residues include asparagine 1 and lysine 3. The active-site Electrophile is histidine 87. The active-site Proton acceptor is the glutamate 160.

The protein belongs to the triosephosphate isomerase family. Homodimer.

The protein localises to the cytoplasm. The catalysed reaction is D-glyceraldehyde 3-phosphate = dihydroxyacetone phosphate. It functions in the pathway carbohydrate biosynthesis; gluconeogenesis. The protein operates within carbohydrate degradation; glycolysis; D-glyceraldehyde 3-phosphate from glycerone phosphate: step 1/1. This chain is Triosephosphate isomerase, cytosolic (TPI1), found in Gracilaria gracilis (Red alga).